The primary structure comprises 450 residues: UDP-N-acetylmuramoylalanine--D-glutamate ligase (450 aa).

119–125 lines the ATP pocket; sequence GSNGKTT.

This sequence belongs to the MurCDEF family.

Its subcellular location is the cytoplasm. It catalyses the reaction UDP-N-acetyl-alpha-D-muramoyl-L-alanine + D-glutamate + ATP = UDP-N-acetyl-alpha-D-muramoyl-L-alanyl-D-glutamate + ADP + phosphate + H(+). Its pathway is cell wall biogenesis; peptidoglycan biosynthesis. Its function is as follows. Cell wall formation. Catalyzes the addition of glutamate to the nucleotide precursor UDP-N-acetylmuramoyl-L-alanine (UMA). This chain is UDP-N-acetylmuramoylalanine--D-glutamate ligase, found in Streptococcus pneumoniae (strain P1031).